An 887-amino-acid chain; its full sequence is Alanine--tRNA ligase (887 aa).

Positions 564, 568, 676, and 680 each coordinate Zn(2+).

Belongs to the class-II aminoacyl-tRNA synthetase family. Requires Zn(2+) as cofactor.

Its subcellular location is the cytoplasm. The catalysed reaction is tRNA(Ala) + L-alanine + ATP = L-alanyl-tRNA(Ala) + AMP + diphosphate. Its function is as follows. Catalyzes the attachment of alanine to tRNA(Ala) in a two-step reaction: alanine is first activated by ATP to form Ala-AMP and then transferred to the acceptor end of tRNA(Ala). Also edits incorrectly charged Ser-tRNA(Ala) and Gly-tRNA(Ala) via its editing domain. This chain is Alanine--tRNA ligase, found in Rhizobium meliloti (strain 1021) (Ensifer meliloti).